Here is a 429-residue protein sequence, read N- to C-terminus: Proton/sodium-glutamate symport protein (429 aa).

The Cytoplasmic segment spans residues 1 to 5; sequence MKRIK. The helical transmembrane segment at 6–26 threads the bilayer; that stretch reads FGLATQIFVGLILGVIVGVIW. The Extracellular portion of the chain corresponds to 27-45; the sequence is YGNPALPTYLQPIGDLFLR. A helical transmembrane segment spans residues 46 to 66; the sequence is LIKMIVIPIVVSSLIIGVAGA. At 67-79 the chain is on the cytoplasmic side; that stretch reads GNGKQVGKLGFRT. A helical transmembrane segment spans residues 80–100; the sequence is ILYFEIITTFAIILGLALANI. Over 101–150 the chain is Extracellular; that stretch reads FHPGTGVNIHEAQKSDISQYVETEKEQSNKSVAETFLHIVPTNFFQSLVE. A helical transmembrane segment spans residues 151 to 171; sequence GDLLAIICFTVLFALGISAIG. Residues 172–190 lie on the Cytoplasmic side of the membrane; it reads ERGKPVLAFFEGVSHAMFH. A helical membrane pass occupies residues 191–211; the sequence is VVNLVMKVAPFGVFALIGVTV. The Extracellular segment spans residues 212–224; sequence SKFGLGSLISLGK. The helical transmembrane segment at 225-245 threads the bilayer; sequence LVGLVYVALAFFLIVIFGIVA. Position 246 (lysine 246) is a topological domain, cytoplasmic. Residues 247-267 form a helical membrane-spanning segment; the sequence is IAGISIFKFLAYMKDEILLAF. Over 268–290 the chain is Extracellular; it reads STSSSETVLPRIMEKMEKIGCPK. The chain crosses the membrane as a helical span at residues 291–311; the sequence is GIVSFVIPIGYTFNLDGSVLY. Over 312-321 the chain is Cytoplasmic; the sequence is QSIAALFLAQ. Residues 322–342 form a helical membrane-spanning segment; the sequence is VYGIDLTIWHQITLVLVLMVT. Residues 343-353 are Extracellular-facing; sequence SKGMAAVPGTS. The helical transmembrane segment at 354–374 threads the bilayer; it reads FVVLLATLGTIGVPAEGLAFI. The Cytoplasmic portion of the chain corresponds to 375 to 429; it reads AGVDRIMDMARTVVNLTGNALAAVVMSKWEGMFNPAKAETVMSQSKTEQNATISG.

The protein belongs to the dicarboxylate/amino acid:cation symporter (DAACS) (TC 2.A.23) family. As to quaternary structure, homotrimer. Interacts with FloT.

The protein localises to the cell membrane. The protein resides in the membrane raft. This carrier protein is part of the Na(+)-dependent, binding-protein-independent glutamate-aspartate transport system. This chain is Proton/sodium-glutamate symport protein (gltT), found in Bacillus subtilis (strain 168).